We begin with the raw amino-acid sequence, 172 residues long: Peptide deformylase (172 aa).

Positions 94 and 136 each coordinate Fe cation. Glu-137 is an active-site residue. His-140 provides a ligand contact to Fe cation.

Belongs to the polypeptide deformylase family. The cofactor is Fe(2+).

It catalyses the reaction N-terminal N-formyl-L-methionyl-[peptide] + H2O = N-terminal L-methionyl-[peptide] + formate. In terms of biological role, removes the formyl group from the N-terminal Met of newly synthesized proteins. Requires at least a dipeptide for an efficient rate of reaction. N-terminal L-methionine is a prerequisite for activity but the enzyme has broad specificity at other positions. The polypeptide is Peptide deformylase (Pelagibacter ubique (strain HTCC1062)).